Consider the following 378-residue polypeptide: Flagellar P-ring protein 2 (378 aa).

The signal sequence occupies residues 1-33 (MHEVSDKTNAIHPLQRVSRALFALGLLCFAAMA).

Belongs to the FlgI family. As to quaternary structure, the basal body constitutes a major portion of the flagellar organelle and consists of four rings (L,P,S, and M) mounted on a central rod.

Its subcellular location is the periplasm. It localises to the bacterial flagellum basal body. Functionally, assembles around the rod to form the L-ring and probably protects the motor/basal body from shearing forces during rotation. The sequence is that of Flagellar P-ring protein 2 from Hahella chejuensis (strain KCTC 2396).